The sequence spans 431 residues: SH2 domain-containing protein 4B (431 aa).

Residues 201-235 are disordered; the sequence is QASENEEREWEEQLRRSKAADEERSRRAQRARDEY. Residues 211–235 are compositionally biased toward basic and acidic residues; sequence EEQLRRSKAADEERSRRAQRARDEY. The SH2 domain occupies 325-417; sequence WFHGIISRES…SGGELLQEPC (93 aa).

The polypeptide is SH2 domain-containing protein 4B (Sh2d4b) (Mus musculus (Mouse)).